Here is a 285-residue protein sequence, read N- to C-terminus: 2,3,4,5-tetrahydropyridine-2,6-dicarboxylate N-succinyltransferase (285 aa).

Positions 111 and 148 each coordinate substrate.

The protein belongs to the transferase hexapeptide repeat family. As to quaternary structure, homotrimer.

The protein resides in the cytoplasm. The catalysed reaction is (S)-2,3,4,5-tetrahydrodipicolinate + succinyl-CoA + H2O = (S)-2-succinylamino-6-oxoheptanedioate + CoA. Its pathway is amino-acid biosynthesis; L-lysine biosynthesis via DAP pathway; LL-2,6-diaminopimelate from (S)-tetrahydrodipicolinate (succinylase route): step 1/3. The chain is 2,3,4,5-tetrahydropyridine-2,6-dicarboxylate N-succinyltransferase from Allorhizobium ampelinum (strain ATCC BAA-846 / DSM 112012 / S4) (Agrobacterium vitis (strain S4)).